The chain runs to 124 residues: Cytochrome c oxidase subunit 4 isoform 1, mitochondrial (124 aa).

Position 4 is an N6-acetyllysine; alternate (lysine 4). An N6-succinyllysine; alternate modification is found at lysine 4. Phosphoserine is present on residues serine 31 and serine 33. Lysine 35 bears the N6-acetyllysine; alternate mark. Lysine 35 bears the N6-succinyllysine; alternate mark. Lysine 42 is modified (N6-acetyllysine).

This sequence belongs to the cytochrome c oxidase IV family. In terms of assembly, component of the cytochrome c oxidase (complex IV, CIV), a multisubunit enzyme composed of 14 subunits. The complex is composed of a catalytic core of 3 subunits MT-CO1, MT-CO2 and MT-CO3, encoded in the mitochondrial DNA, and 11 supernumerary subunits COX4I, COX5A, COX5B, COX6A, COX6B, COX6C, COX7A, COX7B, COX7C, COX8 and NDUFA4, which are encoded in the nuclear genome. The complex exists as a monomer or a dimer and forms supercomplexes (SCs) in the inner mitochondrial membrane with NADH-ubiquinone oxidoreductase (complex I, CI) and ubiquinol-cytochrome c oxidoreductase (cytochrome b-c1 complex, complex III, CIII), resulting in different assemblies (supercomplex SCI(1)III(2)IV(1) and megacomplex MCI(2)III(2)IV(2)). Interacts with PHB2; the interaction decreases in absence of SPHK2. Interacts with AFG1L. Interacts with ABCB7; this interaction allows the regulation of cellular iron homeostasis and cellular reactive oxygen species (ROS) levels in cardiomyocytes. Interacts with FLVCR2; this interaction occurs in the absence of heme and is disrupted upon heme binding. Interacts with IRGC.

The protein localises to the mitochondrion inner membrane. Its pathway is energy metabolism; oxidative phosphorylation. Component of the cytochrome c oxidase, the last enzyme in the mitochondrial electron transport chain which drives oxidative phosphorylation. The respiratory chain contains 3 multisubunit complexes succinate dehydrogenase (complex II, CII), ubiquinol-cytochrome c oxidoreductase (cytochrome b-c1 complex, complex III, CIII) and cytochrome c oxidase (complex IV, CIV), that cooperate to transfer electrons derived from NADH and succinate to molecular oxygen, creating an electrochemical gradient over the inner membrane that drives transmembrane transport and the ATP synthase. Cytochrome c oxidase is the component of the respiratory chain that catalyzes the reduction of oxygen to water. Electrons originating from reduced cytochrome c in the intermembrane space (IMS) are transferred via the dinuclear copper A center (CU(A)) of subunit 2 and heme A of subunit 1 to the active site in subunit 1, a binuclear center (BNC) formed by heme A3 and copper B (CU(B)). The BNC reduces molecular oxygen to 2 water molecules using 4 electrons from cytochrome c in the IMS and 4 protons from the mitochondrial matrix. This Saimiri sciureus (Common squirrel monkey) protein is Cytochrome c oxidase subunit 4 isoform 1, mitochondrial (COX4I1).